We begin with the raw amino-acid sequence, 727 residues long: Probable glutamate carboxypeptidase ARB_02390 (727 aa).

Positions 1-18 are cleaved as a signal peptide; sequence MIVKSLSLLALAAATVEG. N-linked (GlcNAc...) asparagine glycosylation is found at N60 and N80. The PA domain maps to 158-296; it reads ATAEYVYVGR…ISQLDAQPIL (139 aa). R197 contributes to the substrate binding site. N-linked (GlcNAc...) asparagine glycosylation is present at N223. The segment at 255–279 is disordered; the sequence is FPGDPTTPGYPSRPDSPRKDKSPVV. Ca(2+) is bound by residues T261 and Y264. Positions 266-565 are NAALADase; sequence SRPDSPRKDK…QFLGLLGYHL (300 aa). N-linked (GlcNAc...) asparagine glycosylation is found at N310, N319, and N353. A Zn(2+)-binding site is contributed by H366. Catalysis depends on E414, which acts as the For NAALADase activity. E415 is a Zn(2+) binding site. Positions 423 and 426 each coordinate Ca(2+). Residue D443 participates in Zn(2+) binding. Substrate is bound by residues 516–518 and Y530; that span reads TGA. Residue H531 coordinates Zn(2+). The active-site Charge relay system is S604. N614 is a glycosylation site (N-linked (GlcNAc...) asparagine). Residue H665 is the Charge relay system of the active site. Residue 675 to 676 coordinates substrate; sequence GY. N-linked (GlcNAc...) asparagine glycosylation is present at N692.

This sequence belongs to the peptidase M28 family. M28B subfamily. The cofactor is Zn(2+).

It localises to the secreted. It carries out the reaction Release of an unsubstituted, C-terminal glutamyl residue, typically from Ac-Asp-Glu or folylpoly-gamma-glutamates.. In terms of biological role, has both folate hydrolase and N-acetylated-alpha-linked-acidic dipeptidase (NAALADase) activity. Also exhibits a dipeptidyl-peptidase IV type activity. The sequence is that of Probable glutamate carboxypeptidase ARB_02390 from Arthroderma benhamiae (strain ATCC MYA-4681 / CBS 112371) (Trichophyton mentagrophytes).